The chain runs to 50 residues: Large ribosomal subunit protein bL32A (50 aa).

The segment covering 1 to 19 (MAVPKRRKSRSNTRHRRSQ) has biased composition (basic residues). The tract at residues 1-21 (MAVPKRRKSRSNTRHRRSQWK) is disordered.

It belongs to the bacterial ribosomal protein bL32 family.

The polypeptide is Large ribosomal subunit protein bL32A (Saccharopolyspora erythraea (strain ATCC 11635 / DSM 40517 / JCM 4748 / NBRC 13426 / NCIMB 8594 / NRRL 2338)).